We begin with the raw amino-acid sequence, 130 residues long: Fluoride-specific ion channel FluC (130 aa).

4 consecutive transmembrane segments (helical) span residues 1–21 (MGEI…RYGL), 36–56 (GTLI…QWGF), 65–85 (LKLM…TFSY), and 103–123 (ILAN…LGSL). Gly75 and Thr78 together coordinate Na(+).

It belongs to the fluoride channel Fluc/FEX (TC 1.A.43) family.

The protein localises to the cell membrane. The enzyme catalyses fluoride(in) = fluoride(out). With respect to regulation, na(+) is not transported, but it plays an essential structural role and its presence is essential for fluoride channel function. Functionally, fluoride-specific ion channel. Important for reducing fluoride concentration in the cell, thus reducing its toxicity. In Dehalococcoides mccartyi (strain ATCC BAA-2266 / KCTC 15142 / 195) (Dehalococcoides ethenogenes (strain 195)), this protein is Fluoride-specific ion channel FluC.